A 440-amino-acid chain; its full sequence is Cytochrome b (440 aa).

The helical transmembrane segment at 46-66 (IWGIVLAFCLVLQIATGIVLV) threads the bilayer. Heme b is bound by residues His-97 and His-111. 9 consecutive transmembrane segments (helical) span residues 100-120 (GASLFFLAVYIHIFRGLYYGS), 129-149 (WIVGMLIYLMMMGTAFMGYVL), 156-176 (FWGATVITGLFGAIPGVGEAI), 194-214 (FFSLHYLLPFVIAALVVVHIW), 253-273 (LFALAVVLVVFFAIVGFMPNY), 296-315 (WYFLPFYAILRAFTADVWVV), 330-350 (FFGVIAMFGAILVMALVPWLD), 365-385 (WWFWLLAVDFVVLMWVGAMPA), and 394-414 (LAGSAYWFAYFLIILPLLGII). 2 residues coordinate heme b: His-198 and His-212.

This sequence belongs to the cytochrome b family. In terms of assembly, the main subunits of complex b-c1 are: cytochrome b, cytochrome c1 and the Rieske protein. Heme b serves as cofactor.

Its subcellular location is the cell membrane. In terms of biological role, component of the ubiquinol-cytochrome c reductase complex (complex III or cytochrome b-c1 complex), which is a respiratory chain that generates an electrochemical potential coupled to ATP synthesis. The protein is Cytochrome b (petB) of Paracoccus denitrificans.